A 567-amino-acid polypeptide reads, in one-letter code: Geranylgeranyl transferase type-2 subunit alpha (567 aa).

PFTA repeat units follow at residues 44-78 (LDES…HLET), 88-122 (LVKA…RLPE), 124-158 (NWAR…QAAV), 159-193 (APAE…QLHP), 207-241 (VLLK…RAEP), and 363-397 (VLQS…ALDP). S98 carries the post-translational modification Phosphoserine. LRR repeat units follow at residues 442–463 (DVRV…EQLL), 464–486 (LVTH…AALR), 487–508 (CLEV…ANLP), 509–530 (RLQE…QPLV), and 534–555 (RLVL…QERL).

This sequence belongs to the protein prenyltransferase subunit alpha family. In terms of assembly, heterotrimer composed of RABGGTA, RABGGTB and CHM; within this trimer, RABGGTA and RABGGTB form the catalytic component B, while CHM (component A) mediates peptide substrate binding. The Rab GGTase dimer (RGGT) interacts with CHM (component A) prior to Rab protein binding; the association is stabilized by geranylgeranyl pyrophosphate (GGpp). The CHM:RGGT:Rab complex is destabilized by GGpp. Interacts with non-phosphorylated form of RAB8A; phosphorylation of RAB8A at 'Thr-72' disrupts this interaction. Most abundant in the heart, brain, spleen and liver. Less in the lung, muscle, kidney and testis; in these tissues less abundant than the beta subunit.

The enzyme catalyses geranylgeranyl diphosphate + L-cysteinyl-[protein] = S-geranylgeranyl-L-cysteinyl-[protein] + diphosphate. Its activity is regulated as follows. The enzymatic reaction requires the aid of a Rab escort protein (also called component A), such as CHM. Its function is as follows. Catalyzes the transfer of a geranylgeranyl moiety from geranylgeranyl diphosphate to both cysteines of Rab proteins with the C-terminal sequence -XXCC, -XCXC and -CCXX, such as RAB1A, RAB3A, RAB5A and RAB7A. The protein is Geranylgeranyl transferase type-2 subunit alpha (Rabggta) of Rattus norvegicus (Rat).